We begin with the raw amino-acid sequence, 187 residues long: Elongation factor P (187 aa).

Belongs to the elongation factor P family.

It is found in the cytoplasm. It participates in protein biosynthesis; polypeptide chain elongation. Its function is as follows. Involved in peptide bond synthesis. Stimulates efficient translation and peptide-bond synthesis on native or reconstituted 70S ribosomes in vitro. Probably functions indirectly by altering the affinity of the ribosome for aminoacyl-tRNA, thus increasing their reactivity as acceptors for peptidyl transferase. The polypeptide is Elongation factor P (Desulforapulum autotrophicum (strain ATCC 43914 / DSM 3382 / VKM B-1955 / HRM2) (Desulfobacterium autotrophicum)).